The chain runs to 530 residues: ATP synthase subunit alpha 3 (530 aa).

174-181 (GDRATGKT) is an ATP binding site. The span at 507-522 (TASATAPPDPPAASAA) shows a compositional bias: low complexity. Residues 507-530 (TASATAPPDPPAASAAELPQPDSP) are disordered.

It belongs to the ATPase alpha/beta chains family. F-type ATPases have 2 components, CF(1) - the catalytic core - and CF(0) - the membrane proton channel. CF(1) has five subunits: alpha(3), beta(3), gamma(1), delta(1), epsilon(1). CF(0) has three main subunits: a(1), b(2) and c(9-12). The alpha and beta chains form an alternating ring which encloses part of the gamma chain. CF(1) is attached to CF(0) by a central stalk formed by the gamma and epsilon chains, while a peripheral stalk is formed by the delta and b chains.

Its subcellular location is the cell inner membrane. It carries out the reaction ATP + H2O + 4 H(+)(in) = ADP + phosphate + 5 H(+)(out). In terms of biological role, produces ATP from ADP in the presence of a proton gradient across the membrane. The alpha chain is a regulatory subunit. The polypeptide is ATP synthase subunit alpha 3 (Paraburkholderia xenovorans (strain LB400)).